The sequence spans 445 residues: UDP-N-acetylmuramoylalanine--D-glutamate ligase (445 aa).

An ATP-binding site is contributed by 117-123; sequence GSNGKTT.

It belongs to the MurCDEF family.

It is found in the cytoplasm. The enzyme catalyses UDP-N-acetyl-alpha-D-muramoyl-L-alanine + D-glutamate + ATP = UDP-N-acetyl-alpha-D-muramoyl-L-alanyl-D-glutamate + ADP + phosphate + H(+). It participates in cell wall biogenesis; peptidoglycan biosynthesis. Cell wall formation. Catalyzes the addition of glutamate to the nucleotide precursor UDP-N-acetylmuramoyl-L-alanine (UMA). In Neisseria meningitidis serogroup B (strain ATCC BAA-335 / MC58), this protein is UDP-N-acetylmuramoylalanine--D-glutamate ligase.